Here is a 125-residue protein sequence, read N- to C-terminus: UPF0102 protein ABO_0585 (125 aa).

It belongs to the UPF0102 family.

The protein is UPF0102 protein ABO_0585 of Alcanivorax borkumensis (strain ATCC 700651 / DSM 11573 / NCIMB 13689 / SK2).